The primary structure comprises 225 residues: MHGLFISFEGIDGAGKSTHIAGLADAFRAQGRAVTLTREPGGTPLAEKLRDLVLNDAMDSLTEALLIFAARRDHLVRVIAPALVRGDVVLCDRFTDATFAYQGAGRGFDLAVLATLEQWVQSDEGLLGDPAGNFPMKPEVETVIEPHLTVWFDLPPEEAALRLQGARVPDKFEAQPLEFFRRVAKGYSDRQQGHPERFARINASQPRDVVWQAVRQVFVAKGWLA.

10 to 17 (GIDGAGKS) contacts ATP.

It belongs to the thymidylate kinase family.

The enzyme catalyses dTMP + ATP = dTDP + ADP. Functionally, phosphorylation of dTMP to form dTDP in both de novo and salvage pathways of dTTP synthesis. The polypeptide is Thymidylate kinase (Polaromonas sp. (strain JS666 / ATCC BAA-500)).